A 334-amino-acid chain; its full sequence is Tryptophan--tRNA ligase (334 aa).

Residues 11 to 13 and 19 to 20 contribute to the ATP site; these read QPS and GN. The short motif at 12–20 is the 'HIGH' region element; that stretch reads PSGELTIGN. Asp-135 provides a ligand contact to L-tryptophan. ATP is bound by residues 147 to 149, Val-186, and 195 to 199; these read GED and KMSKS. Positions 195 to 199 match the 'KMSKS' region motif; sequence KMSKS.

This sequence belongs to the class-I aminoacyl-tRNA synthetase family. Homodimer.

Its subcellular location is the cytoplasm. The enzyme catalyses tRNA(Trp) + L-tryptophan + ATP = L-tryptophyl-tRNA(Trp) + AMP + diphosphate + H(+). Its function is as follows. Catalyzes the attachment of tryptophan to tRNA(Trp). This is Tryptophan--tRNA ligase from Escherichia coli O157:H7.